A 151-amino-acid polypeptide reads, in one-letter code: Acidic phospholipase A2 5 (151 aa).

The N-terminal stretch at 1-27 (MYPAHLLVLLAVCVSLLGAASIPARPL) is a signal peptide. 7 disulfides stabilise this stretch: C38/C104, C54/C151, C56/C72, C71/C132, C78/C125, C88/C118, and C111/C123. Residues Y55, G57, and G59 each contribute to the Ca(2+) site. Residue H75 is part of the active site. Residue D76 coordinates Ca(2+). D126 is an active-site residue.

It belongs to the phospholipase A2 family. Group I subfamily. D49 sub-subfamily. Ca(2+) is required as a cofactor. As to expression, expressed by the venom gland.

It is found in the secreted. The enzyme catalyses a 1,2-diacyl-sn-glycero-3-phosphocholine + H2O = a 1-acyl-sn-glycero-3-phosphocholine + a fatty acid + H(+). PLA2 catalyzes the calcium-dependent hydrolysis of the 2-acyl groups in 3-sn-phosphoglycerides. The polypeptide is Acidic phospholipase A2 5 (Tropidechis carinatus (Australian rough-scaled snake)).